Consider the following 121-residue polypeptide: Small ribosomal subunit protein uS13 (121 aa).

The interval 93 to 121 (RGLPMRGQRTRTNARTRKGPRKGAAALKK) is disordered.

The protein belongs to the universal ribosomal protein uS13 family. As to quaternary structure, part of the 30S ribosomal subunit. Forms a loose heterodimer with protein S19. Forms two bridges to the 50S subunit in the 70S ribosome.

Located at the top of the head of the 30S subunit, it contacts several helices of the 16S rRNA. In the 70S ribosome it contacts the 23S rRNA (bridge B1a) and protein L5 of the 50S subunit (bridge B1b), connecting the 2 subunits; these bridges are implicated in subunit movement. Contacts the tRNAs in the A and P-sites. This is Small ribosomal subunit protein uS13 from Acidovorax ebreus (strain TPSY) (Diaphorobacter sp. (strain TPSY)).